A 90-amino-acid polypeptide reads, in one-letter code: Large ribosomal subunit protein bL27 (90 aa).

A disordered region spans residues 1 to 21 (MAHKKAGGSSRNGRDSQAKRL).

It belongs to the bacterial ribosomal protein bL27 family.

The sequence is that of Large ribosomal subunit protein bL27 from Laribacter hongkongensis (strain HLHK9).